We begin with the raw amino-acid sequence, 525 residues long: Ankyrin repeat and SOCS box protein 3 (525 aa).

ANK repeat units follow at residues 9 to 38, 42 to 71, 78 to 107, 111 to 140, 145 to 174, 178 to 207, 211 to 240, 246 to 275, 279 to 308, 315 to 346, and 348 to 373; these read DTCS…SIDV, RGWM…SENY, EGFC…DPNA, EETT…NVNG, CGWN…NKEC, FGIT…DVNC, DKAT…DPDL, NWQL…RVCD, NKVS…SPDA, GFSS…QLNE, and HLAY…PSTP. Residues 441 to 505 enclose the SOCS box domain; that stretch reads MLSARASNSS…HDYLLYAEVL (65 aa).

This sequence belongs to the ankyrin SOCS box (ASB) family. Interacts with ELOB and TNFRSF1B.

It functions in the pathway protein modification; protein ubiquitination. In terms of biological role, probable substrate-recognition component of a SCF-like ECS (Elongin-Cullin-SOCS-box protein) E3 ubiquitin-protein ligase complex which mediates the ubiquitination and subsequent proteasomal degradation of target proteins. Recognizes TNFRSF1B. The chain is Ankyrin repeat and SOCS box protein 3 (ASB3) from Bos taurus (Bovine).